A 287-amino-acid chain; its full sequence is MGEEEEKKEKGDEIITAVYKVHLHCRKCACDIKKPLLRFQGVQNVDFDLEKNEIKVKGKIEVVKIHKQIEKWSKKKVELISPKPSEVKKTTTTTTTTSVVEKKTTEIKKDVIRTTVLKVHIHCAQCDKDLQHKLLKHKAIHIVKTDTKAQTLTVQGTIESAKLLAYIKKKVHKHAEIISSKTEEEKKKEEEDKKKKEEEDKKKKEDEKKKEEEKKKEEENKKKEGEKKKEEVKVEVTTKTITQVVEYKEIVKVEGQKDKDGNIPYFVHYVYAPQLFSDENPNACRIV.

HMA domains lie at 14 to 80 and 112 to 176; these read IITA…VELI and IRTT…KHAE. Positions 25, 28, 123, and 126 each coordinate a metal cation. The stretch at 179–235 forms a coiled coil; the sequence is SSKTEEEKKKEEEDKKKKEEEDKKKKEDEKKKEEEKKKEEENKKKEGEKKKEEVKVE. Residues 181 to 232 form a disordered region; sequence KTEEEKKKEEEDKKKKEEEDKKKKEDEKKKEEEKKKEEENKKKEGEKKKEEV. C284 carries the post-translational modification Cysteine methyl ester. A lipid anchor (S-farnesyl cysteine) is attached at C284. A propeptide spans 285–287 (removed in mature form); the sequence is RIV.

This sequence belongs to the HIPP family.

Heavy-metal-binding protein. The chain is Heavy metal-associated isoprenylated plant protein 4 from Arabidopsis thaliana (Mouse-ear cress).